Reading from the N-terminus, the 242-residue chain is Small ribosomal subunit protein uS2 (242 aa).

Belongs to the universal ribosomal protein uS2 family.

The sequence is that of Small ribosomal subunit protein uS2 from Photobacterium profundum (strain SS9).